A 111-amino-acid chain; its full sequence is Universal stress protein B (111 aa).

2 helical membrane-spanning segments follow: residues 1 to 21 and 90 to 110; these read MIST…NMAR and FILT…LMIW.

Belongs to the universal stress protein B family.

The protein resides in the cell inner membrane. The sequence is that of Universal stress protein B from Escherichia coli O45:K1 (strain S88 / ExPEC).